A 225-amino-acid chain; its full sequence is MFLVYFNTFLIIILLFGIIGIYILTFVFNIDFLINNNKIYILSYNATNINNINNLNLYDYSDIIFLTNFNINNNLLVTQANNLQDIPIFNVNNIISNQYNFYSASSNNVNILLGLRKTLNINRNPFLLFRNTSLAIVFNNNETFHCYISSNQNSDVLDIVSHIEFMKSRYNKYVIIGEIPVNNNISINNILNNFAIITNVRLIDKYNSIISFLNINVGTLFVINP.

This is an uncharacterized protein from Amsacta moorei entomopoxvirus (AmEPV).